The sequence spans 139 residues: ATP synthase epsilon chain (139 aa).

It belongs to the ATPase epsilon chain family. In terms of assembly, F-type ATPases have 2 components, CF(1) - the catalytic core - and CF(0) - the membrane proton channel. CF(1) has five subunits: alpha(3), beta(3), gamma(1), delta(1), epsilon(1). CF(0) has three main subunits: a, b and c.

It is found in the cell inner membrane. Produces ATP from ADP in the presence of a proton gradient across the membrane. This is ATP synthase epsilon chain from Actinobacillus pleuropneumoniae serotype 7 (strain AP76).